The following is a 158-amino-acid chain: Cyclic pyranopterin monophosphate synthase (158 aa).

Residues 75–77 (LCH) and 113–114 (ME) contribute to the substrate site. The active site involves aspartate 128.

This sequence belongs to the MoaC family. Homohexamer; trimer of dimers.

It carries out the reaction (8S)-3',8-cyclo-7,8-dihydroguanosine 5'-triphosphate = cyclic pyranopterin phosphate + diphosphate. It functions in the pathway cofactor biosynthesis; molybdopterin biosynthesis. Its function is as follows. Catalyzes the conversion of (8S)-3',8-cyclo-7,8-dihydroguanosine 5'-triphosphate to cyclic pyranopterin monophosphate (cPMP). The polypeptide is Cyclic pyranopterin monophosphate synthase (Pasteurella multocida (strain Pm70)).